The chain runs to 413 residues: Hemocyanin type 2 unit e (413 aa).

The N-linked (GlcNAc...) (high mannose) asparagine glycan is linked to asparagine 17. Histidine 49 lines the Cu cation pocket. Cysteine 55 and cysteine 66 form a disulfide bridge. The 2'-(S-cysteinyl)-histidine (Cys-His) cross-link spans 67-69; the sequence is CVH. Residues histidine 69 and histidine 78 each contribute to the Cu cation site. An N-linked (GlcNAc...) (high mannose) asparagine glycan is attached at asparagine 127. 2 disulfide bridges follow: cysteine 179/cysteine 246 and cysteine 336/cysteine 342. Cu cation contacts are provided by histidine 189, histidine 193, and histidine 220.

Belongs to the tyrosinase family. Hemocyanin subfamily. As to quaternary structure, decamers of large identical subunits, each containing 8 globular oxygen-binding functional units. Cu(2+) serves as cofactor. As to expression, hemolymph.

The protein localises to the secreted. The protein resides in the extracellular space. In terms of biological role, hemocyanins are copper-containing oxygen carriers occurring freely dissolved in the hemolymph of many mollusks and arthropods. This is Hemocyanin type 2 unit e from Rapana venosa (Veined rapa whelk).